The sequence spans 72 residues: Subtilisin-chymotrypsin inhibitor-2B (72 aa).

This sequence belongs to the protease inhibitor I13 (potato type I serine protease inhibitor) family.

In terms of biological role, inhibits both subtilisin and chymotrypsin. The polypeptide is Subtilisin-chymotrypsin inhibitor-2B (Hordeum vulgare (Barley)).